A 315-amino-acid polypeptide reads, in one-letter code: Neuroguidin (315 aa).

The residue at position 2 (alanine 2) is an N-acetylalanine. A coiled-coil region spans residues 7 to 41; it reads LESDVSSSITLLKNLQEQVMAVTAQIQALTTKVRA. A necessary for interaction with EIF4E region spans residues 41–174; it reads AGTYSTEKGL…KGSAKKYVPP (134 aa). Phosphoserine occurs at positions 121, 142, and 143. The disordered stretch occupies residues 123–190; it reads SENDPLRFKP…YDETEAEREQ (68 aa). Acidic residues predominate over residues 144-155; it reads EDEEESEAEEGQ. The segment covering 180-190 has biased composition (basic and acidic residues); it reads HYDETEAEREQ. Residues 181-203 adopt a coiled-coil conformation; sequence YDETEAEREQKRLEKAKRRALSS. Phosphoserine is present on residues serine 204 and serine 214. 2 stretches are compositionally biased toward basic and acidic residues: residues 212–225 and 232–241; these read QYSDAPEEIRDARH and SQEDQHRVNY. Disordered regions lie at residues 212 to 243 and 284 to 315; these read QYSDAPEEIRDARHPHVTRQSQEDQHRVNYEE and GTAHLDEDQNPVKKRKKLPKKGRKKKGFRRRW. The segment covering 295–315 has biased composition (basic residues); it reads VKKRKKLPKKGRKKKGFRRRW.

This sequence belongs to the SAS10 family. In terms of assembly, interacts with CPEB1 and EIF4E. In terms of tissue distribution, expressed in testis, ovary, spleen, kidney, hippocampus and cerebellum (at protein level). Expressed in testis, ovary, spleen, kidney, brain.

The protein resides in the nucleus. It is found in the nucleolus. The protein localises to the chromosome. Its subcellular location is the centromere. It localises to the cytoplasm. The protein resides in the cell projection. It is found in the axon. The protein localises to the dendrite. Its subcellular location is the filopodium. Part of the small subunit (SSU) processome, first precursor of the small eukaryotic ribosomal subunit. During the assembly of the SSU processome in the nucleolus, many ribosome biogenesis factors, an RNA chaperone and ribosomal proteins associate with the nascent pre-rRNA and work in concert to generate RNA folding, modifications, rearrangements and cleavage as well as targeted degradation of pre-ribosomal RNA by the RNA exosome. Its dissociation from the complex determines the transition from state pre-A1 to state pre-A1*. Inhibits mRNA translation in a cytoplasmic polyadenylation element (CPE)-dependent manner. The polypeptide is Neuroguidin (Ngdn) (Mus musculus (Mouse)).